A 537-amino-acid polypeptide reads, in one-letter code: 5,6-dihydroxyindole-2-carboxylic acid oxidase (537 aa).

The signal sequence occupies residues 1–24 (MSAPKLLSLGCIFFPLLLFQQARA). The Lumenal, melanosome portion of the chain corresponds to 25–477 (QFPRQCATVE…WPSREFSVPE (453 aa)). 5 cysteine pairs are disulfide-bonded: C30/C41, C42/C65, C56/C99, C101/C110, and C113/C122. 2 N-linked (GlcNAc...) asparagine glycosylation sites follow: N96 and N104. The N-linked (GlcNAc...) asparagine glycan is linked to N181. Positions 192, 215, and 224 each coordinate Zn(2+). 2 cysteine pairs are disulfide-bonded: C258–C261 and C290–C303. Residues N304 and N350 are each glycosylated (N-linked (GlcNAc...) asparagine). Residues H377 and H381 each coordinate Zn(2+). Residue N385 is glycosylated (N-linked (GlcNAc...) asparagine). H404 lines the Zn(2+) pocket. A helical membrane pass occupies residues 478 to 501 (IIAIAVVGALLLVALIFGTASYLI). The Cytoplasmic segment spans residues 502 to 537 (RARRSMDEANQPLLTDQYQCYAEEYEKLQNPNQSVV).

Belongs to the tyrosinase family. Monomer. Interacts with ATP7A. Interacts with SLC45A2. Requires Cu(2+) as cofactor. It depends on Zn(2+) as a cofactor. Post-translationally, glycosylated. As to expression, pigment cells.

The protein resides in the melanosome membrane. It catalyses the reaction 2 5,6-dihydroxyindole-2-carboxylate + O2 = 2 indole-5,6-quinone-2-carboxylate + 2 H2O. The protein operates within pigment biosynthesis; melanin biosynthesis. The activity depends critically on the nature of the bound metal ion. Catalyzes the oxidation of 5,6-dihydroxyindole-2-carboxylic acid (DHICA) in the presence of bound Cu(2+) ions, but lacks activity in the presence of bound Zn(2+) ions. In terms of biological role, plays a role in melanin biosynthesis. Catalyzes the oxidation of 5,6-dihydroxyindole-2-carboxylic acid (DHICA) into indole-5,6-quinone-2-carboxylic acid in the presence of bound Cu(2+) ions, but not in the presence of Zn(2+). May regulate or influence the type of melanin synthesized. Also to a lower extent, capable of hydroxylating tyrosine and producing melanin. The chain is 5,6-dihydroxyindole-2-carboxylic acid oxidase from Homo sapiens (Human).